Consider the following 449-residue polypeptide: Exodeoxyribonuclease 7 large subunit (449 aa).

This sequence belongs to the XseA family. Heterooligomer composed of large and small subunits.

It is found in the cytoplasm. The catalysed reaction is Exonucleolytic cleavage in either 5'- to 3'- or 3'- to 5'-direction to yield nucleoside 5'-phosphates.. Its function is as follows. Bidirectionally degrades single-stranded DNA into large acid-insoluble oligonucleotides, which are then degraded further into small acid-soluble oligonucleotides. This chain is Exodeoxyribonuclease 7 large subunit, found in Salmonella paratyphi B (strain ATCC BAA-1250 / SPB7).